A 255-amino-acid chain; its full sequence is Probable transcriptional regulatory protein PCC8801_2028 (255 aa).

The protein belongs to the TACO1 family.

The protein resides in the cytoplasm. The sequence is that of Probable transcriptional regulatory protein PCC8801_2028 from Rippkaea orientalis (strain PCC 8801 / RF-1) (Cyanothece sp. (strain PCC 8801)).